We begin with the raw amino-acid sequence, 268 residues long: Mediator of RNA polymerase II transcription subunit 8 (268 aa).

The stretch at 1–29 (MQREEKQLEASLDALLNQVADLKNSLGSF) forms a coiled coil. Phosphoserine is present on serine 82. Positions 133–163 (ADAAQKQIQSLNKMCSNLLEKISKEERESES) form a coiled coil. The segment at 142 to 151 (SLNKMCSNLL) is interaction with the Elongin BC complex. Disordered stretches follow at residues 156–176 (KEERESESGGLRPNKQTFNPG) and 193–268 (NWRP…PYQR). Residues 200 to 209 (SGPGQPGQPG) are compositionally biased toward gly residues.

Belongs to the Mediator complex subunit 8 family. As to quaternary structure, component of the Mediator complex, which is composed of MED1, MED4, MED6, MED7, MED8, MED9, MED10, MED11, MED12, MED13, MED13L, MED14, MED15, MED16, MED17, MED18, MED19, MED20, MED21, MED22, MED23, MED24, MED25, MED26, MED27, MED29, MED30, MED31, CCNC, CDK8 and CDC2L6/CDK11. The MED12, MED13, CCNC and CDK8 subunits form a distinct module termed the CDK8 module. Mediator containing the CDK8 module is less active than Mediator lacking this module in supporting transcriptional activation. Individual preparations of the Mediator complex lacking one or more distinct subunits have been variously termed ARC, CRSP, DRIP, PC2, SMCC and TRAP. May be part of a multisubunit E3 ubiquitin-protein ligase complex with the Elongin BC complex (ELOB and ELOC), CUL2 and RBX1.

It is found in the nucleus. Its pathway is protein modification; protein ubiquitination. In terms of biological role, component of the Mediator complex, a coactivator involved in the regulated transcription of nearly all RNA polymerase II-dependent genes. Mediator functions as a bridge to convey information from gene-specific regulatory proteins to the basal RNA polymerase II transcription machinery. Mediator is recruited to promoters by direct interactions with regulatory proteins and serves as a scaffold for the assembly of a functional preinitiation complex with RNA polymerase II and the general transcription factors. May play a role as a target recruitment subunit in E3 ubiquitin-protein ligase complexes and thus in ubiquitination and subsequent proteasomal degradation of target proteins. The protein is Mediator of RNA polymerase II transcription subunit 8 (Med8) of Mus musculus (Mouse).